The primary structure comprises 222 residues: 7-cyano-7-deazaguanine synthase (222 aa).

8-18 provides a ligand contact to ATP; the sequence is LSGGLDSTTCL. Positions 186, 194, 197, and 200 each coordinate Zn(2+).

Belongs to the QueC family. In terms of assembly, homodimer. The cofactor is Zn(2+).

It catalyses the reaction 7-carboxy-7-deazaguanine + NH4(+) + ATP = 7-cyano-7-deazaguanine + ADP + phosphate + H2O + H(+). It participates in purine metabolism; 7-cyano-7-deazaguanine biosynthesis. Catalyzes the ATP-dependent conversion of 7-carboxy-7-deazaguanine (CDG) to 7-cyano-7-deazaguanine (preQ(0)). The chain is 7-cyano-7-deazaguanine synthase from Acetivibrio thermocellus (strain ATCC 27405 / DSM 1237 / JCM 9322 / NBRC 103400 / NCIMB 10682 / NRRL B-4536 / VPI 7372) (Clostridium thermocellum).